Here is a 1072-residue protein sequence, read N- to C-terminus: Vacuolar membrane protease (1072 aa).

Over 1 to 9 the chain is Cytoplasmic; it reads MINPISFRP. A helical membrane pass occupies residues 10–30; it reads GPVTFWTTLIYLALLIPIVII. Residues 31 to 404 are Vacuolar-facing; it reads NEKTPAAPKT…SFVLFGLRGM (374 aa). N-linked (GlcNAc...) asparagine glycans are attached at residues N48, N116, N119, and N128. The Zn(2+) site is built by H185 and D197. E231 acts as the Proton acceptor in catalysis. E232, E257, and H330 together coordinate Zn(2+). Residues 405 to 425 form a helical membrane-spanning segment; sequence FAWSLTLLIATPLVLVGITWL. At 426 to 457 the chain is on the cytoplasmic side; sequence LRNLDKDYFFTSTVKTKEHPEYEAVPIGGWKG. A helical membrane pass occupies residues 458 to 478; it reads FFRFPFALGVAVFFTISSALL. Residues 479 to 492 lie on the Vacuolar side of the membrane; sequence MNKVNPLIVYSSRY. A helical transmembrane segment spans residues 493 to 513; that stretch reads SVWVMMVSIFYFSFWMIMRGA. The Cytoplasmic segment spans residues 514 to 523; that stretch reads NFVRPSALHR. Residues 524–544 traverse the membrane as a helical segment; that stretch reads GYANLWLFVFGWIVLVAVTAL. Residues 545-554 lie on the Vacuolar side of the membrane; it reads EDRRRIAAGY. A helical transmembrane segment spans residues 555–575; the sequence is IFVFLESAIFLSCLISFVELL. The Cytoplasmic segment spans residues 576-747; that stretch reads AVPRKSSYAL…YDHEQEWSGH (172 aa). Residues 593–713 are disordered; that stretch reads GQEHDHNGYQ…GTNDRGRTTF (121 aa). Residues 606–617 are compositionally biased toward basic and acidic residues; the sequence is DSTDEPSLRARA. A compositionally biased stretch (polar residues) spans 643-661; the sequence is GTTNGLSTAPSVAAHSSQP. The chain crosses the membrane as a helical span at residues 748–768; the sequence is LPSWAWFFQFLLLGPFMIILA. Topologically, residues 769 to 789 are vacuolar; the sequence is AQTGLMLTDAVYQTGSDGSKL. A helical transmembrane segment spans residues 790 to 810; sequence ITPYLIIFVFTVLLILPLTPF. The Cytoplasmic segment spans residues 811–817; sequence IHRVTHH. The helical transmembrane segment at 818–838 threads the bilayer; the sequence is IPVFLLVVFIVTLTYNLIAFP. At 839–1072 the chain is on the vacuolar side; the sequence is FSANNRYKTF…VEGRKAFKIV (234 aa). N-linked (GlcNAc...) asparagine glycosylation is found at N932 and N974.

The protein belongs to the peptidase M28 family. The cofactor is Zn(2+).

The protein resides in the vacuole membrane. Its function is as follows. May be involved in vacuolar sorting and osmoregulation. The chain is Vacuolar membrane protease from Neurospora crassa (strain ATCC 24698 / 74-OR23-1A / CBS 708.71 / DSM 1257 / FGSC 987).